A 469-amino-acid polypeptide reads, in one-letter code: NADH-quinone oxidoreductase subunit N (469 aa).

The next 14 helical transmembrane spans lie at 9-29, 40-60, 76-96, 105-125, 128-148, 162-182, 201-221, 234-254, 265-285, 294-316, 327-347, 365-385, 402-422, and 448-468; these read PLLM…LIAG, VGVM…VQMV, ATGV…AVAG, EAET…LAGA, LLLL…LVGL, YLMG…LYGL, VAVA…AGGV, ANAT…LVAL, LAWP…GNLA, RLLG…VAGA, YLGG…ALPG, AAAL…AVFI, LAVV…RWII, and VLAA…WQLV.

Belongs to the complex I subunit 2 family. NDH-1 is composed of 14 different subunits. Subunits NuoA, H, J, K, L, M, N constitute the membrane sector of the complex.

The protein resides in the cell membrane. The catalysed reaction is a quinone + NADH + 5 H(+)(in) = a quinol + NAD(+) + 4 H(+)(out). Functionally, NDH-1 shuttles electrons from NADH, via FMN and iron-sulfur (Fe-S) centers, to quinones in the respiratory chain. The immediate electron acceptor for the enzyme in this species is believed to be a menaquinone. Couples the redox reaction to proton translocation (for every two electrons transferred, four hydrogen ions are translocated across the cytoplasmic membrane), and thus conserves the redox energy in a proton gradient. In Mycobacterium sp. (strain JLS), this protein is NADH-quinone oxidoreductase subunit N.